Here is a 234-residue protein sequence, read N- to C-terminus: Orotidine 5'-phosphate decarboxylase (234 aa).

Substrate contacts are provided by residues Asp11, Lys33, 60 to 69 (DLKFHDIPNT), Thr120, Arg181, Gln190, Gly210, and Arg211. Catalysis depends on Lys62, which acts as the Proton donor.

It belongs to the OMP decarboxylase family. Type 1 subfamily. As to quaternary structure, homodimer.

It catalyses the reaction orotidine 5'-phosphate + H(+) = UMP + CO2. It participates in pyrimidine metabolism; UMP biosynthesis via de novo pathway; UMP from orotate: step 2/2. Its function is as follows. Catalyzes the decarboxylation of orotidine 5'-monophosphate (OMP) to uridine 5'-monophosphate (UMP). In Aliivibrio fischeri (strain ATCC 700601 / ES114) (Vibrio fischeri), this protein is Orotidine 5'-phosphate decarboxylase.